The chain runs to 484 residues: Glutamate--tRNA ligase (484 aa).

Positions 12-22 (PSPTGEPHVGT) match the 'HIGH' region motif. A 'KMSKS' region motif is present at residues 253 to 257 (KLSKR). Lysine 256 contributes to the ATP binding site.

It belongs to the class-I aminoacyl-tRNA synthetase family. Glutamate--tRNA ligase type 1 subfamily. Monomer.

Its subcellular location is the cytoplasm. It carries out the reaction tRNA(Glu) + L-glutamate + ATP = L-glutamyl-tRNA(Glu) + AMP + diphosphate. Its function is as follows. Catalyzes the attachment of glutamate to tRNA(Glu) in a two-step reaction: glutamate is first activated by ATP to form Glu-AMP and then transferred to the acceptor end of tRNA(Glu). The sequence is that of Glutamate--tRNA ligase from Rhizobium etli (strain CIAT 652).